A 640-amino-acid polypeptide reads, in one-letter code: Glycosyltransferase-like protein gnt14 (640 aa).

The Cytoplasmic segment spans residues Met1–Arg14. Residues Leu15–Ile35 form a helical; Signal-anchor for type II membrane protein membrane-spanning segment. Residues Gln36–Trp640 are Extracellular-facing. Disordered stretches follow at residues Pro63 to Ser184 and Asn254 to Tyr277. Residues Ile65–Pro171 are compositionally biased toward low complexity. Asn68 carries an N-linked (GlcNAc...) asparagine glycan. N-linked (GlcNAc...) asparagine glycans are attached at residues Asn410 and Asn539.

Belongs to the glycosyltransferase 8 family. Highly divergent.

The protein localises to the membrane. In Dictyostelium discoideum (Social amoeba), this protein is Glycosyltransferase-like protein gnt14 (gnt14).